Consider the following 205-residue polypeptide: Thymidylate kinase (205 aa).

ATP is bound at residue 10-17; that stretch reads GIDGAGKT.

The protein belongs to the thymidylate kinase family.

The catalysed reaction is dTMP + ATP = dTDP + ADP. Its function is as follows. Phosphorylation of dTMP to form dTDP in both de novo and salvage pathways of dTTP synthesis. In Nitrosospira multiformis (strain ATCC 25196 / NCIMB 11849 / C 71), this protein is Thymidylate kinase.